Consider the following 309-residue polypeptide: Protein FdhE (309 aa).

It belongs to the FdhE family.

Its subcellular location is the cytoplasm. Its function is as follows. Necessary for formate dehydrogenase activity. The protein is Protein FdhE of Escherichia coli O45:K1 (strain S88 / ExPEC).